The primary structure comprises 69 residues: DNA gyrase inhibitor YacG (69 aa).

4 residues coordinate Zn(2+): Cys7, Cys10, Cys26, and Cys30.

It belongs to the DNA gyrase inhibitor YacG family. In terms of assembly, interacts with GyrB. Zn(2+) serves as cofactor.

Inhibits all the catalytic activities of DNA gyrase by preventing its interaction with DNA. Acts by binding directly to the C-terminal domain of GyrB, which probably disrupts DNA binding by the gyrase. This is DNA gyrase inhibitor YacG from Shewanella sp. (strain W3-18-1).